The following is a 50-amino-acid chain: Peptide encoded by miPEP319a (50 aa).

Regulatory peptide encoded by the primary transcript (pri-miR319a) of the microRNA miR319a that enhances the accumulation of its corresponding mature miRNA. Acts probably as a transcriptional activator of its corresponding pri-miRNA. In Arabidopsis thaliana (Mouse-ear cress), this protein is Peptide encoded by miPEP319a.